The sequence spans 244 residues: CTD nuclear envelope phosphatase 1 (244 aa).

A helical membrane pass occupies residues 7–29; the sequence is LLGLRTFVAFAAKLWSFFIYLLR. The 168-residue stretch at 57 to 224 folds into the FCP1 homology domain; it reads AQVKRKILVL…LNLLPMLDAL (168 aa).

The protein belongs to the dullard family. In terms of assembly, (Microbial infection) Interacts with Chandipura virus matrix protein. As to quaternary structure, interacts with CNEP1R1; the complex dephosphorylates LPIN1 and LPIN2. As to expression, muscle specific with lower expression in other metabolic tissues.

It localises to the endoplasmic reticulum membrane. It is found in the nucleus membrane. The catalysed reaction is O-phospho-L-seryl-[protein] + H2O = L-seryl-[protein] + phosphate. It catalyses the reaction O-phospho-L-threonyl-[protein] + H2O = L-threonyl-[protein] + phosphate. Its function is as follows. Serine/threonine protein phosphatase forming with CNEP1R1 an active phosphatase complex that dephosphorylates and may activate LPIN1 and LPIN2. LPIN1 and LPIN2 are phosphatidate phosphatases that catalyze the conversion of phosphatidic acid to diacylglycerol and control the metabolism of fatty acids at different levels. May indirectly modulate the lipid composition of nuclear and/or endoplasmic reticulum membranes and be required for proper nuclear membrane morphology and/or dynamics. May also indirectly regulate the production of lipid droplets and triacylglycerol. May antagonize BMP signaling. This Homo sapiens (Human) protein is CTD nuclear envelope phosphatase 1 (CTDNEP1).